A 1038-amino-acid chain; its full sequence is Eukaryotic translation initiation factor 3 subunit A (1038 aa).

Residues 92-121 adopt a coiled-coil conformation; that stretch reads LKKFIELAEKKVTEAQAKADEIQSSLESAA. The PCI domain maps to 339-523; the sequence is MTKAVSFVLL…GVLTFDTDVF (185 aa). A coiled-coil region spans residues 611–899; sequence IDKKKEAATD…QKQREEEAEA (289 aa). Basic and acidic residues-rich tracts occupy residues 621-632 and 800-901; these read ALQRKQREEETR and RHEE…EARR. Disordered regions lie at residues 621-641 and 800-1038; these read ALQR…QQLQ and RHEE…QQGQ. 2 stretches are compositionally biased toward low complexity: residues 943–952 and 976–993; these read KEAAGGAAPE and GASA…AAPS. Over residues 1002–1019 the composition is skewed to polar residues; the sequence is DSGSSTPPSRTQTPATTS.

It belongs to the eIF-3 subunit A family. Component of the eukaryotic translation initiation factor 3 (eIF-3) complex.

The protein resides in the cytoplasm. RNA-binding component of the eukaryotic translation initiation factor 3 (eIF-3) complex, which is involved in protein synthesis of a specialized repertoire of mRNAs and, together with other initiation factors, stimulates binding of mRNA and methionyl-tRNAi to the 40S ribosome. The eIF-3 complex specifically targets and initiates translation of a subset of mRNAs involved in cell proliferation. In Aspergillus oryzae (strain ATCC 42149 / RIB 40) (Yellow koji mold), this protein is Eukaryotic translation initiation factor 3 subunit A (tif32).